A 221-amino-acid chain; its full sequence is Probable transaldolase (221 aa).

Lys87 serves as the catalytic Schiff-base intermediate with substrate.

The protein belongs to the transaldolase family. Type 3B subfamily.

Its subcellular location is the cytoplasm. The catalysed reaction is D-sedoheptulose 7-phosphate + D-glyceraldehyde 3-phosphate = D-erythrose 4-phosphate + beta-D-fructose 6-phosphate. Its pathway is carbohydrate degradation; pentose phosphate pathway; D-glyceraldehyde 3-phosphate and beta-D-fructose 6-phosphate from D-ribose 5-phosphate and D-xylulose 5-phosphate (non-oxidative stage): step 2/3. In terms of biological role, transaldolase is important for the balance of metabolites in the pentose-phosphate pathway. The protein is Probable transaldolase of Syntrophobacter fumaroxidans (strain DSM 10017 / MPOB).